The primary structure comprises 658 residues: Sodium/nucleoside cotransporter 1 (658 aa).

Residues methionine 1–serine 75 lie on the Cytoplasmic side of the membrane. Residues leucine 76–leucine 99 traverse the membrane as a helical segment. Over aspartate 100 to alanine 104 the chain is Extracellular. A helical membrane pass occupies residues leucine 105–leucine 123. Residues lysine 124–glutamine 142 are Cytoplasmic-facing. A helical transmembrane segment spans residues leucine 143–tryptophan 162. At leucine 163–glutamine 173 the chain is on the extracellular side. The helical transmembrane segment at leucine 174–cysteine 190 threads the bilayer. Residues serine 191–alanine 196 are Cytoplasmic-facing. Residues valine 197 to isoleucine 217 traverse the membrane as a helical segment. Residues arginine 218–valine 256 lie on the Extracellular side of the membrane. Residues phenylalanine 257 to leucine 278 traverse the membrane as a helical segment. Topologically, residues glycine 279–alanine 289 are cytoplasmic. A helical membrane pass occupies residues tryptophan 290 to glycine 313. Topologically, residues methionine 314–glutamate 332 are extracellular. Residues isoleucine 333–phenylalanine 355 form a helical membrane-spanning segment. The Cytoplasmic segment spans residues glycine 356 to serine 361. Residues leucine 362 to tyrosine 381 traverse the membrane as a helical segment. Over proline 382–alanine 418 the chain is Extracellular. Residues leucine 419–leucine 441 form a helical membrane-spanning segment. At serine 442–glycine 452 the chain is on the cytoplasmic side. The chain crosses the membrane as a helical span at residues leucine 453–tryptophan 474. At threonine 475–threonine 529 the chain is on the extracellular side. The helical transmembrane segment at threonine 530 to valine 553 threads the bilayer. The Cytoplasmic portion of the chain corresponds to proline 554 to valine 564. A helical transmembrane segment spans residues isoleucine 565–valine 587. The Extracellular portion of the chain corresponds to proline 588–alanine 658. N-linked (GlcNAc...) asparagine glycosylation occurs at asparagine 653.

The protein belongs to the concentrative nucleoside transporter (CNT) (TC 2.A.41) family. Post-translationally, N-glycosylated. N-glycosylation is required for localization to the plasma membrane and the transporter activity.

The protein resides in the cell membrane. It localises to the apical cell membrane. It carries out the reaction uridine(out) + Na(+)(out) = uridine(in) + Na(+)(in). It catalyses the reaction thymidine(out) + Na(+)(out) = thymidine(in) + Na(+)(in). The enzyme catalyses cytidine(out) + Na(+)(out) = cytidine(in) + Na(+)(in). The catalysed reaction is adenosine(out) + Na(+)(out) = adenosine(in) + Na(+)(in). Its activity is regulated as follows. Due to its high apparent affinity but slow transport, adenosine could act as a negative regulator of pyrimidine transport under some conditions. In terms of biological role, sodium and pyrimidine nucleoside symporter of the plasma membrane that imports uridine, thymidine and cytidine into cells by coupling their transport to the transmembrane sodium electrochemical gradient. Also transports adenosine, an atypical substrate transported with high apparent affinity, but low maximum velocity. Therefore, exhibits the transport characteristics of the nucleoside transport system cit or N2 subtype (N2/cit). Involved in renal nucleoside (re)absorption. This Oryctolagus cuniculus (Rabbit) protein is Sodium/nucleoside cotransporter 1 (SLC28A1).